A 201-amino-acid chain; its full sequence is MSRAVAGPEIERLIQLLGRLPGLGPRSARRATLHLIKKRETLMAPLGLALQDVLGKIVECQVCGNVDVRDPCTVCTDIHRDSSVLVVVAEVADLWALERANAINAKYHVLGGVLSPLDGVGPDDLNLTKLVERVGAGGVNEVILALGATVDAQTTAHYVTDLLRETGVKVTRLAHGVPVGGELDHLDEGTLSAAIRARTAL.

The C4-type zinc-finger motif lies at 60–75 (CQVCGNVDVRDPCTVC). One can recognise a Toprim domain in the interval 83–178 (SVLVVVAEVA…KVTRLAHGVP (96 aa)).

Belongs to the RecR family.

In terms of biological role, may play a role in DNA repair. It seems to be involved in an RecBC-independent recombinational process of DNA repair. It may act with RecF and RecO. This chain is Recombination protein RecR, found in Azorhizobium caulinodans (strain ATCC 43989 / DSM 5975 / JCM 20966 / LMG 6465 / NBRC 14845 / NCIMB 13405 / ORS 571).